Consider the following 149-residue polypeptide: Ribosomal RNA large subunit methyltransferase H (149 aa).

S-adenosyl-L-methionine contacts are provided by residues leucine 71, glycine 98, and 117 to 122; that span reads LSKLTL.

Belongs to the RNA methyltransferase RlmH family. As to quaternary structure, homodimer.

Its subcellular location is the cytoplasm. The catalysed reaction is pseudouridine(1915) in 23S rRNA + S-adenosyl-L-methionine = N(3)-methylpseudouridine(1915) in 23S rRNA + S-adenosyl-L-homocysteine + H(+). Functionally, specifically methylates the pseudouridine at position 1915 (m3Psi1915) in 23S rRNA. In Campylobacter jejuni subsp. jejuni serotype O:6 (strain 81116 / NCTC 11828), this protein is Ribosomal RNA large subunit methyltransferase H.